Here is a 966-residue protein sequence, read N- to C-terminus: Serine/threonine-protein phosphatase 6 regulatory subunit 2 (966 aa).

A Phosphoserine modification is found at serine 289. 2 stretches are compositionally biased toward basic and acidic residues: residues 408–424 and 669–687; these read TEAS…HENG and GPER…HRDA. 2 disordered regions span residues 408–436 and 657–707; these read TEAS…PAAS and GAPH…VEGD. Phosphoserine occurs at positions 771 and 828. The disordered stretch occupies residues 819 to 856; that stretch reads ASDSSSSGGSHSEDGDQKAASAMDAVSRGPGREAPPLP.

The protein belongs to the SAPS family. In terms of assembly, protein phosphatase 6 (PP6) holoenzyme is proposed to be a heterotrimeric complex formed by the catalytic subunit, a SAPS domain-containing subunit (PP6R) and an ankyrin repeat-domain containing regulatory subunit (ARS). Interacts with PPP6C and NFKBIE. Interacts with ANKRD28. As to expression, ubiquitously expressed with strongest expression in the testis followed by liver, heart, kidney, brain and placenta.

It is found in the cytoplasm. Regulatory subunit of protein phosphatase 6 (PP6). May function as a scaffolding PP6 subunit. Involved in the PP6-mediated dephosphorylation of NFKBIE opposing its degradation in response to TNF-alpha. The polypeptide is Serine/threonine-protein phosphatase 6 regulatory subunit 2 (PPP6R2) (Homo sapiens (Human)).